The sequence spans 217 residues: Small ribosomal subunit protein uS5 (217 aa).

The 64-residue stretch at 49 to 112 folds into the S5 DRBM domain; the sequence is LEEKVLDVKL…AQAKKNIIRV (64 aa).

Belongs to the universal ribosomal protein uS5 family. As to quaternary structure, part of the 30S ribosomal subunit. Contacts protein S4.

In terms of biological role, with S4 and S12 plays an important role in translational accuracy. The polypeptide is Small ribosomal subunit protein uS5 (Methanocaldococcus jannaschii (strain ATCC 43067 / DSM 2661 / JAL-1 / JCM 10045 / NBRC 100440) (Methanococcus jannaschii)).